Consider the following 145-residue polypeptide: AN1-type zinc finger protein 2A (145 aa).

2 AN1-type zinc fingers span residues 4-52 and 94-142; these read PDLG…QKDV and KIFT…RPTI. The Zn(2+) site is built by cysteine 10, cysteine 15, cysteine 25, cysteine 28, cysteine 33, histidine 36, histidine 42, cysteine 44, cysteine 100, cysteine 105, cysteine 115, cysteine 118, cysteine 123, histidine 126, histidine 132, and cysteine 134.

Its subcellular location is the cytoplasm. The protein localises to the nucleus. The protein is AN1-type zinc finger protein 2A (ZFAND2A) of Homo sapiens (Human).